We begin with the raw amino-acid sequence, 403 residues long: Na(+)-translocating NADH-quinone reductase subunit B (403 aa).

3 helical membrane-spanning segments follow: residues 56 to 76 (IMIM…YNIG), 114 to 134 (LAMF…TFIV), and 165 to 185 (LPAT…VVIA). FMN phosphoryl threonine is present on T231. Helical transmembrane passes span 260 to 280 (GSVG…IIYM), 287 to 307 (IVLG…VIGS), 312 to 332 (MFAM…GMFF), 348 to 368 (WAYG…NPAF), and 371 to 391 (GMML…YFVA).

Belongs to the NqrB/RnfD family. As to quaternary structure, composed of six subunits; NqrA, NqrB, NqrC, NqrD, NqrE and NqrF. It depends on FMN as a cofactor.

The protein localises to the cell inner membrane. It catalyses the reaction a ubiquinone + n Na(+)(in) + NADH + H(+) = a ubiquinol + n Na(+)(out) + NAD(+). NQR complex catalyzes the reduction of ubiquinone-1 to ubiquinol by two successive reactions, coupled with the transport of Na(+) ions from the cytoplasm to the periplasm. NqrA to NqrE are probably involved in the second step, the conversion of ubisemiquinone to ubiquinol. The chain is Na(+)-translocating NADH-quinone reductase subunit B from Pseudoalteromonas atlantica (strain T6c / ATCC BAA-1087).